A 346-amino-acid chain; its full sequence is Biotin synthase (346 aa).

The region spanning 38-256 (RQVQVSTLLS…IAVARIMMPT (219 aa)) is the Radical SAM core domain. [4Fe-4S] cluster-binding residues include cysteine 53, cysteine 57, and cysteine 60. [2Fe-2S] cluster is bound by residues cysteine 97, cysteine 128, cysteine 188, and arginine 260.

Belongs to the radical SAM superfamily. Biotin synthase family. Homodimer. [4Fe-4S] cluster serves as cofactor. It depends on [2Fe-2S] cluster as a cofactor.

It catalyses the reaction (4R,5S)-dethiobiotin + (sulfur carrier)-SH + 2 reduced [2Fe-2S]-[ferredoxin] + 2 S-adenosyl-L-methionine = (sulfur carrier)-H + biotin + 2 5'-deoxyadenosine + 2 L-methionine + 2 oxidized [2Fe-2S]-[ferredoxin]. Its pathway is cofactor biosynthesis; biotin biosynthesis; biotin from 7,8-diaminononanoate: step 2/2. Its function is as follows. Catalyzes the conversion of dethiobiotin (DTB) to biotin by the insertion of a sulfur atom into dethiobiotin via a radical-based mechanism. This is Biotin synthase from Cronobacter sakazakii (strain ATCC BAA-894) (Enterobacter sakazakii).